The sequence spans 208 residues: A-type ATP synthase subunit E (208 aa).

This sequence belongs to the V-ATPase E subunit family. In terms of assembly, has multiple subunits with at least A(3), B(3), C, D, E, F, H, I and proteolipid K(x).

It localises to the cell membrane. Its function is as follows. Component of the A-type ATP synthase that produces ATP from ADP in the presence of a proton gradient across the membrane. The sequence is that of A-type ATP synthase subunit E from Ignicoccus hospitalis (strain KIN4/I / DSM 18386 / JCM 14125).